The sequence spans 339 residues: MESRKDITNQEELWKMKPRRNLEEDDYLHKDTGETSMLKRPVLLHLHQTAHADEFDCPSELQHTQELFPQWHLPIKIAAIIASLTFLYTLLREVIHPLATSHQQYFYKIPILVINKVLPMVSITLLALVYLPGVIAAIVQLHNGTKYKKFPHWLDKWMLTRKQFGLLSFFFAVLHAIYSLSYPMRRSYRYKLLNWAYQQVQQNKEDAWIEHDVWRMEIYVSLGIVGLAILALLAVTSIPSVSDSLTWREFHYIQSKLGIVSLLLGTIHALIFAWNKWIDIKQFVWYTPPTFMIAVFLPIVVLIFKSILFLPCLRKKILKIRHGWEDVTKINKTEICSQL.

The next 2 helical transmembrane spans lie at 71–91 (WHLP…YTLL) and 119–139 (PMVS…AAIV). One can recognise a Ferric oxidoreductase domain in the interval 118–265 (LPMVSITLLA…KLGIVSLLLG (148 aa)). Residues glutamine 140 and arginine 161 each coordinate FAD. The next 2 helical transmembrane spans lie at 164-184 (FGLL…SYPM) and 218-238 (IYVS…VTSI). Histidine 175 is a heme b binding site. FAD-binding residues include serine 237 and glutamine 254. 2 helical membrane passes run 258 to 278 (GIVS…NKWI) and 291 to 311 (FMIA…LFLP). A heme b-binding site is contributed by histidine 268.

It belongs to the STEAP family. In terms of assembly, homotrimer. The cofactor is FAD. It depends on heme b as a cofactor. As to expression, ubiquitously expressed. Highly expressed in prostate tumors.

Its subcellular location is the endosome membrane. The protein localises to the cell membrane. In terms of biological role, does not function as a metalloreductase due to the absence of binding sites for the electron-donating substrate NADPH. Promotes Fe(3+) reduction when fused to the NADPH-binding domain of STEAP4. The polypeptide is STEAP1 protein (STEAP1) (Homo sapiens (Human)).